The chain runs to 177 residues: MRGLGGSTETALRLGSDAKDRVYRAWDGFIDFAARDNVLEVALGLIIAQAFTSVVNSFVSDIVLPLVSLLPFIMRNMDEKFAILSKGPHYQEGYNTIEQARDDGALVLAYGVFLEKIVNFLGISLTLYTLAQLYMVFSKRKIIKRTVKCKYCRKWISERALRCVNCSSWQDGREDVQ.

Transmembrane regions (helical) follow at residues 54–74 and 117–137; these read VVNSFVSDIVLPLVSLLPFIM and IVNFLGISLTLYTLAQLYMVF. A glycan (N-linked (GlcNAc...) asparagine) is linked at asparagine 165.

It localises to the membrane. Its pathway is secondary metabolite biosynthesis; terpenoid biosynthesis. Part of the gene cluster that mediates the biosynthesis of anditomin, a fungal meroterpenoid. The first step of the pathway is the synthesis of 3,5-dimethylorsellinic acid (DMOA) by the polyketide synthase andM. DMOA is then converted to the phthalide compound 5,7-dihydroxy-4,6-dimethylphthalide (DHDMP) by the cytochrome P450 monooxygenase andK, which is further prenylated by the prenyltransferase andD to yield farnesyl-DHDMP. Further epoxidation by the FAD-dependent monooxygenase andE leads to epoxyfarnesyl-DHDMP. The next step involves the terpene cyclase andB that converts epoxyfarnesyl-DHDMP into preandiloid A through opening of the epoxide ring followed by the cyclization of the farnesyl moiety. Preandiloid A is in turn oxidized at the C-3 hydroxyl group to yield preandiloid B by the dehydrogenase andC. The dioxygenase andA is solely responsible for the dehydrogenation of preandiloid B leading to the enone preandiloid C, as well as for the intriguing structural rearrangement to generate the bicyclo[2.2.2]octane core, transforming preandiloid C into andiconin. FAD-binding monooxygenase andJ then produces andilesin D which is reduced by dehydrogenase andI to yield andilesin A. Action of acetyltransferase andG followed by a spontaneous acetate elimination leads then to andilesin B, which is in turn substrate of the short chain dehydrogenase andH to yield andilesin C. Finally, the dioxygenase andF catalyzes the transformation of andilesin C to anditomin. The exact role of andL within the anditomin biosynthetic pathway has not been identified yet. In Emericella variicolor (Aspergillus stellatus), this protein is Anditomin synthesis protein L.